The following is a 115-amino-acid chain: Chaperone protein PrsD (115 aa).

It belongs to the periplasmic pilus chaperone family.

It is found in the periplasm. Its function is as follows. Mediates assembly of pili by forming soluble multimeric complexes with pili subunits as an intermediate step in the assembly process. The polypeptide is Chaperone protein PrsD (prsD) (Escherichia coli).